The chain runs to 204 residues: Ribosomal RNA small subunit methyltransferase J (204 aa).

Residues 55-56 (RD), 71-72 (ER), and D123 contribute to the S-adenosyl-L-methionine site.

The protein belongs to the methyltransferase superfamily. RsmJ family.

It localises to the cytoplasm. The catalysed reaction is guanosine(1516) in 16S rRNA + S-adenosyl-L-methionine = N(2)-methylguanosine(1516) in 16S rRNA + S-adenosyl-L-homocysteine + H(+). Its function is as follows. Specifically methylates the guanosine in position 1516 of 16S rRNA. The protein is Ribosomal RNA small subunit methyltransferase J of Rhodopseudomonas palustris (strain ATCC BAA-98 / CGA009).